A 134-amino-acid polypeptide reads, in one-letter code: ATP synthase epsilon chain (134 aa).

Belongs to the ATPase epsilon chain family. In terms of assembly, F-type ATPases have 2 components, CF(1) - the catalytic core - and CF(0) - the membrane proton channel. CF(1) has five subunits: alpha(3), beta(3), gamma(1), delta(1), epsilon(1). CF(0) has three main subunits: a, b and c.

The protein localises to the cell membrane. Produces ATP from ADP in the presence of a proton gradient across the membrane. This is ATP synthase epsilon chain from Clostridium botulinum (strain Eklund 17B / Type B).